Here is a 248-residue protein sequence, read N- to C-terminus: Proteasome subunit alpha (248 aa).

Positions 229–248 are disordered; sequence LLEADGATTEAESSAEEEDE.

This sequence belongs to the peptidase T1A family. The 20S proteasome core is composed of 14 alpha and 14 beta subunits that assemble into four stacked heptameric rings, resulting in a barrel-shaped structure. The two inner rings, each composed of seven catalytic beta subunits, are sandwiched by two outer rings, each composed of seven alpha subunits. The catalytic chamber with the active sites is on the inside of the barrel. Has a gated structure, the ends of the cylinder being occluded by the N-termini of the alpha-subunits. Is capped by the proteasome-associated ATPase, ARC.

It is found in the cytoplasm. The protein operates within protein degradation; proteasomal Pup-dependent pathway. With respect to regulation, the formation of the proteasomal ATPase ARC-20S proteasome complex, likely via the docking of the C-termini of ARC into the intersubunit pockets in the alpha-rings, may trigger opening of the gate for substrate entry. Interconversion between the open-gate and close-gate conformations leads to a dynamic regulation of the 20S proteasome proteolysis activity. Functionally, component of the proteasome core, a large protease complex with broad specificity involved in protein degradation. This Streptomyces scabiei (strain 87.22) protein is Proteasome subunit alpha.